The following is an 86-amino-acid chain: Sodium channel neurotoxin MeuNaTxalpha-5 (86 aa).

An N-terminal signal peptide occupies residues 1-19; it reads MNYLILISFALLVITGVES. Residues 21–85 form the LCN-type CS-alpha/beta domain; the sequence is RDAYIAKPHN…VPIRIPGKCH (65 aa). 4 disulfide bridges follow: Cys31–Cys84, Cys35–Cys57, Cys43–Cys67, and Cys47–Cys69. Residue Arg86 is a propeptide, removed by a carboxypeptidase.

It belongs to the long (4 C-C) scorpion toxin superfamily. Sodium channel inhibitor family. Alpha subfamily. As to expression, expressed by the venom gland.

It is found in the secreted. Alpha toxins bind voltage-independently at site-3 of sodium channels (Nav) and inhibit the inactivation of the activated channels, thereby blocking neuronal transmission. This toxin inhibits inactivation of Nav1.6/SCN8A (EC(50)=790 nM) and drosophila DmNav1 (EC(50)=280 nM). The toxin (1 uM) does not significantly shift the midpoint of activation at the two channels, but induces a significant depolarizing shift in the V(1/2) of inactivation of the channels. Has antimicrobial activity. This chain is Sodium channel neurotoxin MeuNaTxalpha-5, found in Mesobuthus eupeus (Lesser Asian scorpion).